Here is a 525-residue protein sequence, read N- to C-terminus: MRQQPRWKLYLVVLVALGSIYYALPSLLGGNLPSWMPNKVIHQGLDLQGGLYLLYDVKVEEAIKQAGNNMVDSARNLLRKERQRYRGIEQVGADQVVIRLTPNSDTERMLSVLKDELRESKVEHFQPEAQIRLTLGEAEKVEIRKFAVDQAIEIIRNRIDAFGVSEPSIQKQGERRIIVQLPGIKNPDRAKGLIGRTARLDFKLVNEKGDLNRALEGQVPADSELMYEERSANQGGKSAYPLLVFKRTILSGQHIQNAQTTFNEYNEPIVSVKFDAVGGRKFSQITGEHIKERLAIVLDGKVQSAPVIQDKIAGGRATISGSFTREEAHDLAIVLRAGALPAPLVILEERTVGPTLGADSVAQGLNSVLIGGVLVVLFMVLYYKGFGMLANLAVVLNVTILVSLLALMQATLTLPGIAGAVLLLGMAVDANVLIFERIREELRLGKSPLAAIDHGYSKAFSTILDANITTLITAVILYQFGTGPVRGFAVTLSVGLLASMFTAIFVTRVVLAEVVKNRRLKTLSI.

Transmembrane regions (helical) follow at residues 9–29, 368–388, 392–412, 415–435, 460–480, and 487–507; these read LYLV…SLLG, VLIG…GFGM, LAVV…QATL, PGIA…VLIF, FSTI…LYQF, and GFAV…IFVT.

This sequence belongs to the SecD/SecF family. SecD subfamily. As to quaternary structure, forms a complex with SecF. Part of the essential Sec protein translocation apparatus which comprises SecA, SecYEG and auxiliary proteins SecDF-YajC and YidC.

The protein resides in the cell inner membrane. In terms of biological role, part of the Sec protein translocase complex. Interacts with the SecYEG preprotein conducting channel. SecDF uses the proton motive force (PMF) to complete protein translocation after the ATP-dependent function of SecA. The polypeptide is Protein translocase subunit SecD (Magnetococcus marinus (strain ATCC BAA-1437 / JCM 17883 / MC-1)).